The primary structure comprises 170 residues: Siroheme decarboxylase NirL subunit (170 aa).

Belongs to the Ahb/Nir family. In terms of assembly, probably forms a complex composed of NirD, NirL, NirG and NirH. All proteins are required for the total conversion of siroheme to didecarboxysiroheme.

It catalyses the reaction siroheme + 2 H(+) = 12,18-didecarboxysiroheme + 2 CO2. Its pathway is porphyrin-containing compound metabolism. In terms of biological role, involved in heme d1 biosynthesis. Catalyzes the decarboxylation of siroheme into didecarboxysiroheme. This is Siroheme decarboxylase NirL subunit from Stutzerimonas stutzeri (Pseudomonas stutzeri).